The sequence spans 455 residues: Probable transcription factor GLK1 (455 aa).

Low complexity predominate over residues 145-163 (AAVEAKSSSPSSTTSSSQE). Residues 145–183 (AAVEAKSSSPSSTTSSSQEAESRHKSSSKSSHGKKKAKV) form a disordered region. Positions 169–181 (KSSSKSSHGKKKA) are enriched in basic residues. Positions 177 to 236 (GKKKAKVDWTPELHRRFVQAVEQLGIDKAVPSRILEIMGIDSLTRHNIASHLQKYRSHRK) constitute an HTH myb-type domain. Positions 207-232 (PSRILEIMGIDSLTRHNIASHLQKYR) form a DNA-binding region, H-T-H motif.

In terms of tissue distribution, expressed in leaves.

It is found in the nucleus. Functionally, probable transcriptional activator that promotes chloroplast development. Acts as an activator of nuclear photosynthetic genes involved in chlorophyll biosynthesis, light harvesting, and electron transport. This chain is Probable transcription factor GLK1 (GLK1), found in Oryza sativa subsp. japonica (Rice).